Here is a 126-residue protein sequence, read N- to C-terminus: Nitrogenase-stabilizing/protective protein NifW (126 aa).

The tract at residues 104 to 126 (VPMSEITVERPATTQTDEKGQQR) is disordered.

The protein belongs to the NifW family. As to quaternary structure, homotrimer; associates with NifD.

Its function is as follows. May protect the nitrogenase Fe-Mo protein from oxidative damage. The polypeptide is Nitrogenase-stabilizing/protective protein NifW (Parafrankia sp. (strain EAN1pec)).